A 107-amino-acid chain; its full sequence is Urease subunit beta (107 aa).

Belongs to the urease beta subunit family. As to quaternary structure, heterotrimer of UreA (gamma), UreB (beta) and UreC (alpha) subunits. Three heterotrimers associate to form the active enzyme.

It localises to the cytoplasm. It catalyses the reaction urea + 2 H2O + H(+) = hydrogencarbonate + 2 NH4(+). It functions in the pathway nitrogen metabolism; urea degradation; CO(2) and NH(3) from urea (urease route): step 1/1. This chain is Urease subunit beta, found in Escherichia coli.